Consider the following 550-residue polypeptide: Carboxypeptidase Y homolog A (550 aa).

The N-terminal stretch at 1 to 18 (MKSLVLGLLVGSAIASGP) is a signal peptide. Positions 19–131 (LQHVLHAPPD…KLSQYDLRIK (113 aa)) are excised as a propeptide. A disordered region spans residues 20-39 (QHVLHAPPDPEPKPEPEPQV). Intrachain disulfides connect Cys185–Cys424, Cys319–Cys333, Cys343–Cys366, Cys350–Cys359, and Cys388–Cys394. N-linked (GlcNAc...) asparagine glycans are attached at residues Asn203 and Asn216. The active site involves Ser272. N-linked (GlcNAc...) asparagine glycosylation is present at Asn289. Asn387 carries an N-linked (GlcNAc...) asparagine glycan. Asp463 is a catalytic residue. N-linked (GlcNAc...) asparagine glycosylation is found at Asn493 and Asn514. His525 is an active-site residue.

The protein belongs to the peptidase S10 family.

Its subcellular location is the vacuole. It catalyses the reaction Release of a C-terminal amino acid with broad specificity.. Its function is as follows. Vacuolar carboxypeptidase involved in degradation of small peptides. Digests preferentially peptides containing an aliphatic or hydrophobic residue in P1' position, as well as methionine, leucine or phenylalanine in P1 position of ester substrate. This chain is Carboxypeptidase Y homolog A (CPYA), found in Paracoccidioides brasiliensis (strain Pb18).